Here is a 318-residue protein sequence, read N- to C-terminus: Taste receptor type 2 member 60 (318 aa).

The Extracellular segment spans residues 1–7; sequence MNGDHMV. A helical membrane pass occupies residues 8–28; that stretch reads LGSSVTDKKAIILVTILLLLR. Over 29 to 40 the chain is Cytoplasmic; that stretch reads LVAIAGNGFITA. A helical transmembrane segment spans residues 41–61; it reads ALGVEWVLRRMLLPCDKLLVS. Residues 62–88 are Extracellular-facing; the sequence is LGASRFCLQSVVMGKTIYVFLHPMAFP. The helical transmembrane segment at 89–109 threads the bilayer; that stretch reads YNPVLQFLAFQWDFLNAATLW. Over 110–128 the chain is Cytoplasmic; the sequence is SSTWLSVFYCVKIATFTHP. Residues 129-149 form a helical membrane-spanning segment; it reads VFFWLKHKLSGWLPWMLFSSV. Residues 150–183 lie on the Extracellular side of the membrane; sequence GLSSFTTILFFIGNHRMYQNYLRNHLQPWNVTGD. The N-linked (GlcNAc...) asparagine glycan is linked to Asn179. The helical transmembrane segment at 184–204 threads the bilayer; it reads SIRSYCEKFYLFPLKMITWTM. Topologically, residues 205–234 are cytoplasmic; that stretch reads PTAVFFICMILLITSLGRHRKKALLTTSGF. The chain crosses the membrane as a helical span at residues 235–255; that stretch reads REPSVQAHIKALLALLSFAML. The Extracellular segment spans residues 256-264; the sequence is FISYFLSLV. Residues 265–285 traverse the membrane as a helical segment; it reads FSAAGIFPPLDFKFWVWESVI. The Cytoplasmic portion of the chain corresponds to 286–318; it reads YLCAAVHPIILLFSNCRLRAVLKSRRSSRCGTP.

Belongs to the G-protein coupled receptor T2R family. Expressed in subsets of taste receptor cells of the tongue and exclusively in gustducin-positive cells.

It is found in the membrane. Its function is as follows. Receptor that may play a role in the perception of bitterness and is gustducin-linked. May play a role in sensing the chemical composition of the gastrointestinal content. The activity of this receptor may stimulate alpha gustducin, mediate PLC-beta-2 activation and lead to the gating of TRPM5. The chain is Taste receptor type 2 member 60 (TAS2R60) from Homo sapiens (Human).